A 467-amino-acid chain; its full sequence is Sodium-dependent phosphate transport protein 1 (467 aa).

Asparagine 41, asparagine 49, and asparagine 58 each carry an N-linked (GlcNAc...) asparagine glycan. The next 10 membrane-spanning stretches (helical) occupy residues 81 to 101, 119 to 139, 178 to 198, 200 to 220, 257 to 277, 301 to 321, 339 to 359, 365 to 385, 401 to 421, and 433 to 453; these read GIIL…VGYF, SVLS…VVVC, FLLG…SLGW, MVFY…FVLF, AILK…FFWS, GFLS…AGQL, LFTA…PYLS, IVIF…GVFI, CSTL…GLIL, and FILM…VATA.

This sequence belongs to the major facilitator superfamily. Sodium/anion cotransporter family. In terms of assembly, interacts with PDZK1. Expressed in kidney cortex, liver and brain but not in other tissues.

The protein localises to the apical cell membrane. The enzyme catalyses 3 Na(+)(out) + phosphate(out) = 3 Na(+)(in) + phosphate(in). It catalyses the reaction urate(out) = urate(in). In terms of biological role, important for the resorption of phosphate by the kidney. May be involved in actively transporting phosphate into cells via Na(+) cotransport in the renal brush border membrane. Plays a role in urate transport in the kidney. This Homo sapiens (Human) protein is Sodium-dependent phosphate transport protein 1 (SLC17A1).